Here is a 98-residue protein sequence, read N- to C-terminus: MARSLKKNPFVVHHLVRKIDKLNKKKKKGIIKTWSRASTIIPTMIGHTIAVYKGKEHLPIYITDYMTGHKLGEFAPTLYFLRGHPTERPTKNDNRSQR.

The protein belongs to the universal ribosomal protein uS19 family.

The protein resides in the plastid. It is found in the chloroplast. Protein S19 forms a complex with S13 that binds strongly to the 16S ribosomal RNA. The chain is Small ribosomal subunit protein uS19c from Jasminum nudiflorum (Winter jasmine).